Reading from the N-terminus, the 658-residue chain is Glycogen debranching enzyme (658 aa).

D336 serves as the catalytic Nucleophile. E371 serves as the catalytic Proton donor. The interval 459–486 (EANGEENRDGTNSNYSDNNGKEGLGGPL) is disordered.

It belongs to the glycosyl hydrolase 13 family.

The catalysed reaction is Hydrolysis of (1-&gt;6)-alpha-D-glucosidic linkages to branches with degrees of polymerization of three or four glucose residues in limit dextrin.. It functions in the pathway glycan degradation; glycogen degradation. Removes maltotriose and maltotetraose chains that are attached by 1,6-alpha-linkage to the limit dextrin main chain, generating a debranched limit dextrin. This chain is Glycogen debranching enzyme, found in Salmonella gallinarum (strain 287/91 / NCTC 13346).